We begin with the raw amino-acid sequence, 602 residues long: GTP-binding protein 2 (602 aa).

The segment at glycine 16–glutamate 64 is disordered. A compositionally biased stretch (basic residues) spans lysine 40 to glycine 50. In terms of domain architecture, tr-type G spans phenylalanine 170 to serine 398. GTP is bound by residues glycine 179–serine 186, aspartate 260–histidine 264, and serine 316–aspartate 319.

This sequence belongs to the TRAFAC class translation factor GTPase superfamily. Classic translation factor GTPase family. GTPBP1 subfamily. As to expression, predominantly expressed in thymus, spleen, and testis. Expressed at lower levels in brain, lung, kidney, and ovary.

This chain is GTP-binding protein 2, found in Homo sapiens (Human).